Here is a 529-residue protein sequence, read N- to C-terminus: Intraflagellar transport protein 56 (529 aa).

A disordered region spans residues 1–21 (MLHNRMTTAFERSKEQEHEAA). Residues 11-21 (ERSKEQEHEAA) show a composition bias toward basic and acidic residues. 6 TPR repeats span residues 57–90 (GNAD…KNPP), 154–187 (SADQ…QPEC), 189–221 (AIYM…AEDS), 285–321 (SEAR…EYTL), 359–392 (VLGR…PKES), and 428–461 (PVHR…SLQT).

This sequence belongs to the IFT56 family.

Its subcellular location is the cell projection. The protein localises to the cilium. It is found in the flagellum. The protein resides in the cytoplasm. It localises to the cytoskeleton. Its subcellular location is the flagellum axoneme. The protein localises to the flagellum basal body. Component of the intraflagellar transport complex B (IFT-B) involved in flagellar assembly. This chain is Intraflagellar transport protein 56, found in Giardia intestinalis (strain ATCC 50803 / WB clone C6) (Giardia lamblia).